The sequence spans 1003 residues: cGMP-dependent protein kinase (1003 aa).

Residues 1–141 (MGACSSKAQH…KAIKQQEDTQ (141 aa)) form a disordered region. A lipid anchor (N-myristoyl glycine) is attached at G2. C4 carries the S-palmitoyl cysteine lipid modification. Residues 69–85 (EQQQQQQQQQQQQQEQQ) are compositionally biased toward low complexity. Composition is skewed to basic and acidic residues over residues 86 to 109 (QHPE…ERKP) and 127 to 141 (ERKV…EDTQ). CNMP-binding domain stretches follow at residues 173–289 (VCSS…FLAS), 292–391 (FFEM…RVLG), 411–548 (VFAS…ATLG), and 570–669 (IFRY…LQIV). 3',5'-cyclic GMP is bound by residues G237, E238, R247, and T248. 3',5'-cyclic GMP-binding residues include R625, G634, E635, A637, R644, and S645. The Protein kinase domain maps to 693–950 (LNVVRVVGRG…YKDIKEHAFF (258 aa)). ATP contacts are provided by residues 699–707 (VGRGTFGTV) and K722. D816 serves as the catalytic Proton acceptor. An AGC-kinase C-terminal domain is found at 951–1003 (SDFDWDRLAGRDLSPPLLPKGEIYAEDAEEGGLDIEEDEGIELEDEYEWDKDF).

The protein belongs to the protein kinase superfamily. AGC Ser/Thr protein kinase family. cGMP subfamily. As to quaternary structure, monomer. Requires Mg(2+) as cofactor.

Its subcellular location is the cell membrane. The protein localises to the cytoplasm. It carries out the reaction L-seryl-[protein] + ATP = O-phospho-L-seryl-[protein] + ADP + H(+). The enzyme catalyses L-threonyl-[protein] + ATP = O-phospho-L-threonyl-[protein] + ADP + H(+). Its activity is regulated as follows. Activated by cGMP. The cGMP-binding domains acts cooperatively to activate PKG. Inhibited by the antiparasitic small molecule 4-[2-(4-fluorophenyl)-5-(1-methylpiperidine-4-yl)-1Hpyrrol- 3-yl]pyridine (compound 1). Serine/threonine protein kinase which acts as a downstream effector of the second messenger cGMP. In Eimeria tenella (Coccidian parasite), this protein is cGMP-dependent protein kinase.